The following is a 517-amino-acid chain: ADP-ribosylation factor GTPase-activating protein 3 (517 aa).

An Arf-GAP domain is found at 10 to 126; that stretch reads LTIFKRLRSV…IKALASQATR (117 aa). The segment at 25 to 48 adopts a C4-type zinc-finger fold; that stretch reads CFDCGAKNPSWASITYGVFLCIDC. Positions 139–200 are disordered; that stretch reads VPPSSPPPKE…EQGPSVEGLN (62 aa). Over residues 159-176 the composition is skewed to polar residues; the sequence is EVSSTGWASAQPEPSLTP. Phosphoserine is present on Ser-231. Positions 243 to 263 form a coiled coil; the sequence is NEIEKQAQAVDKMNAQEDLLS. Residues Ser-271 and Ser-275 each carry the phosphoserine modification. Basic and acidic residues predominate over residues 291–305; the sequence is EKMNMSGKKKAESER. 2 disordered regions span residues 291 to 349 and 362 to 422; these read EKMN…SDDS and MELR…QKKF. Residues 312-333 are compositionally biased toward polar residues; that stretch reads NSRSGISHSVTSDMQTIEQETP. Ser-371 is modified (phosphoserine). Positions 379-390 are enriched in basic and acidic residues; sequence YWKKETIKDTDP. A phosphoserine mark is found at Ser-429, Ser-452, Ser-454, Ser-456, Ser-458, and Ser-459.

It localises to the cytoplasm. The protein resides in the golgi apparatus membrane. With respect to regulation, GAP activity stimulated by phosphatidylinositol 4,5-bisphosphate (PIP2). In terms of biological role, GTPase-activating protein (GAP) for ADP ribosylation factor 1 (ARF1). Hydrolysis of ARF1-bound GTP may lead to dissociation of coatomer from Golgi-derived membranes to allow fusion with target membranes. In Bos taurus (Bovine), this protein is ADP-ribosylation factor GTPase-activating protein 3.